Here is a 279-residue protein sequence, read N- to C-terminus: MPELPEVEVTRRGLEPLIGATVTQAVIRQPAMRWPIPSHLPQVLHGARLLELRRRGKYIIARFESGCLILHLGMSGRLCLLESDTFPEKHDHFDLHFADGRVMRMRDPRRFGAVLWAGDQPDEHSLLKVLGQEPLDEAFNGEFLQQAIRTRSSPIKTVIMDSHLVVGVGNIYASESLFRAGIHPETPARALTLAQCRRLVEEVKLTLQDALQAGGSSLRDFFGADGNPGYFQQTYFVYGRTGQPCRVCQTPIAVLRLGQRSTFYCPACQQGQPPSNAMP.

P2 serves as the catalytic Schiff-base intermediate with DNA. The Proton donor role is filled by E3. K57 serves as the catalytic Proton donor; for beta-elimination activity. 3 residues coordinate DNA: H90, R109, and R151. The segment at 236–270 adopts an FPG-type zinc-finger fold; the sequence is FVYGRTGQPCRVCQTPIAVLRLGQRSTFYCPACQQ. R260 acts as the Proton donor; for delta-elimination activity in catalysis.

This sequence belongs to the FPG family. Monomer. The cofactor is Zn(2+).

The catalysed reaction is Hydrolysis of DNA containing ring-opened 7-methylguanine residues, releasing 2,6-diamino-4-hydroxy-5-(N-methyl)formamidopyrimidine.. It carries out the reaction 2'-deoxyribonucleotide-(2'-deoxyribose 5'-phosphate)-2'-deoxyribonucleotide-DNA = a 3'-end 2'-deoxyribonucleotide-(2,3-dehydro-2,3-deoxyribose 5'-phosphate)-DNA + a 5'-end 5'-phospho-2'-deoxyribonucleoside-DNA + H(+). Involved in base excision repair of DNA damaged by oxidation or by mutagenic agents. Acts as a DNA glycosylase that recognizes and removes damaged bases. Has a preference for oxidized purines, such as 7,8-dihydro-8-oxoguanine (8-oxoG). Has AP (apurinic/apyrimidinic) lyase activity and introduces nicks in the DNA strand. Cleaves the DNA backbone by beta-delta elimination to generate a single-strand break at the site of the removed base with both 3'- and 5'-phosphates. The sequence is that of Formamidopyrimidine-DNA glycosylase from Methylobacillus flagellatus (strain ATCC 51484 / DSM 6875 / VKM B-1610 / KT).